We begin with the raw amino-acid sequence, 102 residues long: Monothiol glutaredoxin-S4 (102 aa).

Positions 1-101 (MDKLQKMISE…PMLKRVGALW (101 aa)) constitute a Glutaredoxin domain. Cys21 is a [2Fe-2S] cluster binding site. The Responsive for interaction with TGA factors motif lies at 99–102 (ALWL).

The protein belongs to the glutaredoxin family. CC-type subfamily.

The protein resides in the cytoplasm. Its subcellular location is the nucleus. May only reduce GSH-thiol disulfides, but not protein disulfides. The chain is Monothiol glutaredoxin-S4 (GRXS4) from Arabidopsis thaliana (Mouse-ear cress).